Here is a 324-residue protein sequence, read N- to C-terminus: Glutathione synthetase (324 aa).

The ATP-grasp domain maps to 125–312; the sequence is EKLFTTTHFP…ISTIILDNLE (188 aa). 152–209 provides a ligand contact to ATP; it reads FIKTYKDIIIKPLHGMAGLSIFRIKEHDPNTSVIIETMTKYETIPCISQNYITDIQKG. Mg(2+) contacts are provided by Glu283 and Asn285.

The protein belongs to the prokaryotic GSH synthase family. Mg(2+) serves as cofactor. Requires Mn(2+) as cofactor.

The catalysed reaction is gamma-L-glutamyl-L-cysteine + glycine + ATP = glutathione + ADP + phosphate + H(+). Its pathway is sulfur metabolism; glutathione biosynthesis; glutathione from L-cysteine and L-glutamate: step 2/2. The sequence is that of Glutathione synthetase from Buchnera aphidicola subsp. Baizongia pistaciae (strain Bp).